The chain runs to 952 residues: 2-oxoglutarate dehydrogenase E1 component (952 aa).

This sequence belongs to the alpha-ketoglutarate dehydrogenase family. In terms of assembly, homodimer. Part of the 2-oxoglutarate dehydrogenase (OGDH) complex composed of E1 (2-oxoglutarate dehydrogenase), E2 (dihydrolipoamide succinyltransferase) and E3 (dihydrolipoamide dehydrogenase); the complex contains multiple copies of the three enzymatic components (E1, E2 and E3). Thiamine diphosphate is required as a cofactor.

It catalyses the reaction N(6)-[(R)-lipoyl]-L-lysyl-[protein] + 2-oxoglutarate + H(+) = N(6)-[(R)-S(8)-succinyldihydrolipoyl]-L-lysyl-[protein] + CO2. In terms of biological role, E1 component of the 2-oxoglutarate dehydrogenase (OGDH) complex which catalyzes the decarboxylation of 2-oxoglutarate, the first step in the conversion of 2-oxoglutarate to succinyl-CoA and CO(2). The sequence is that of 2-oxoglutarate dehydrogenase E1 component from Geobacillus sp. (strain WCH70).